Reading from the N-terminus, the 436-residue chain is Prenyltransferase nscD (436 aa).

Belongs to the tryptophan dimethylallyltransferase family.

Its pathway is secondary metabolite biosynthesis. Prenyltransferase; part of the gene cluster that mediates the biosynthesis of neosartoricin B, a prenylated anthracenone that probably exhibits T-cell antiproliferative activity, suggestive of a physiological role as an immunosuppressive agent. The non-reducing polyketide synthase nscA probably synthesizes and cyclizes the decaketide backbone. The hydrolase nscB then mediates the product release through hydrolysis followed by spontaneous decarboxylation. The prenyltransferase nscD catalyzes the addition of the dimethylallyl group to the aromatic C5. The FAD-dependent monooxygenase nscC is then responsible for the stereospecific hydroxylation at C2. Neosartoricin B can be converted into two additional compounds neosartoricins C and D. Neosartoricin C is a spirocyclic compound that is cyclized through the attack of C3 hydroxyl on C14, followed by dehydration. On the other hand, neosartoricin D is a further cyclized compound in which attack of C2 on C14 in neosartoricin C results in the formation of the acetal-containing dioxabicyclo-octanone ring. Both of these compounds are novel and possibly represent related metabolites of the gene cluster. The protein is Prenyltransferase nscD of Arthroderma gypseum (strain ATCC MYA-4604 / CBS 118893) (Microsporum gypseum).